The following is a 568-amino-acid chain: 2-succinyl-5-enolpyruvyl-6-hydroxy-3-cyclohexene-1-carboxylate synthase (568 aa).

It belongs to the TPP enzyme family. MenD subfamily. As to quaternary structure, homodimer. Requires Mg(2+) as cofactor. It depends on Mn(2+) as a cofactor. Thiamine diphosphate is required as a cofactor.

The catalysed reaction is isochorismate + 2-oxoglutarate + H(+) = 5-enolpyruvoyl-6-hydroxy-2-succinyl-cyclohex-3-ene-1-carboxylate + CO2. It participates in quinol/quinone metabolism; 1,4-dihydroxy-2-naphthoate biosynthesis; 1,4-dihydroxy-2-naphthoate from chorismate: step 2/7. Its pathway is quinol/quinone metabolism; menaquinone biosynthesis. In terms of biological role, catalyzes the thiamine diphosphate-dependent decarboxylation of 2-oxoglutarate and the subsequent addition of the resulting succinic semialdehyde-thiamine pyrophosphate anion to isochorismate to yield 2-succinyl-5-enolpyruvyl-6-hydroxy-3-cyclohexene-1-carboxylate (SEPHCHC). This chain is 2-succinyl-5-enolpyruvyl-6-hydroxy-3-cyclohexene-1-carboxylate synthase, found in Actinobacillus pleuropneumoniae serotype 3 (strain JL03).